Reading from the N-terminus, the 135-residue chain is ATP synthase epsilon chain (135 aa).

Belongs to the ATPase epsilon chain family. F-type ATPases have 2 components, CF(1) - the catalytic core - and CF(0) - the membrane proton channel. CF(1) has five subunits: alpha(3), beta(3), gamma(1), delta(1), epsilon(1). CF(0) has three main subunits: a, b and c.

The protein localises to the cell inner membrane. In terms of biological role, produces ATP from ADP in the presence of a proton gradient across the membrane. The chain is ATP synthase epsilon chain from Brucella suis (strain ATCC 23445 / NCTC 10510).